The primary structure comprises 245 residues: 8-amino-3,8-dideoxy-manno-octulosonate cytidylyltransferase (245 aa).

Belongs to the KdsB family.

It is found in the cytoplasm. The enzyme catalyses 8-amino-3,8-dideoxy-alpha-D-manno-octulosonate + CTP = CMP-8-amino-3,8-dideoxy-alpha-D-manno-oct-2-ulosonate + diphosphate. It functions in the pathway bacterial outer membrane biogenesis; lipopolysaccharide biosynthesis. Functionally, activates KDO8N (a required 8-carbon sugar) for incorporation into bacterial lipopolysaccharide in the Shewanella genus. The chain is 8-amino-3,8-dideoxy-manno-octulosonate cytidylyltransferase from Shewanella baltica (strain OS185).